The sequence spans 308 residues: Homoserine O-acetyltransferase (308 aa).

Cys-142 (acyl-thioester intermediate) is an active-site residue. Substrate contacts are provided by Lys-163 and Ser-192. His-235 (proton acceptor) is an active-site residue. Glu-237 is a catalytic residue. Substrate is bound at residue Arg-249.

Belongs to the MetA family.

The protein localises to the cytoplasm. The catalysed reaction is L-homoserine + acetyl-CoA = O-acetyl-L-homoserine + CoA. It participates in amino-acid biosynthesis; L-methionine biosynthesis via de novo pathway; O-acetyl-L-homoserine from L-homoserine: step 1/1. In terms of biological role, transfers an acetyl group from acetyl-CoA to L-homoserine, forming acetyl-L-homoserine. In Agrobacterium fabrum (strain C58 / ATCC 33970) (Agrobacterium tumefaciens (strain C58)), this protein is Homoserine O-acetyltransferase.